Here is a 132-residue protein sequence, read N- to C-terminus: Venom CUB domain-containing protein 2 (132 aa).

An N-terminal signal peptide occupies residues 1-17 (MKTLFLAIALFSAVALA). A CUB domain is found at 22–129 (ESAELVPGGE…RGFVACKATA (108 aa)). 2 disulfides stabilise this stretch: Cys-66/Cys-125 and Cys-77/Cys-94.

This sequence belongs to the venom CUB family. Expressed by the venom gland (posterior main gland) (at protein level).

It localises to the secreted. The chain is Venom CUB domain-containing protein 2 from Platymeris rhadamanthus (Red spot assassin bug).